The sequence spans 391 residues: Fructose-bisphosphate aldolase 3, chloroplastic (391 aa).

Residues 1–40 (MASASFVKPNTLSSPWIGQRSFAHTSASSSPPPRVSFAIR) constitute a chloroplast transit peptide. A substrate-binding site is contributed by arginine 88. Serine 150 is modified (phosphoserine). A substrate-binding site is contributed by lysine 178. Residue serine 208 is modified to Phosphoserine. Glutamate 218 acts as the Proton acceptor in catalysis. Residue lysine 260 is the Schiff-base intermediate with dihydroxyacetone-P of the active site. 302-304 (SGG) contributes to the substrate binding site. Lysine 387 is modified (N6,N6,N6-trimethyllysine).

Belongs to the class I fructose-bisphosphate aldolase family. Homotetramer. Post-translationally, can be trimethylated at Lys-387 by LSMT-L, but the trimethylation has no effect in vitro. In terms of processing, S-glutathionylated. In terms of tissue distribution, expressed in roots, and at low levels in rosettes leaves, cauline leaves, stems and flowers.

It localises to the plastid. The protein localises to the chloroplast. Its subcellular location is the plastoglobule. It carries out the reaction beta-D-fructose 1,6-bisphosphate = D-glyceraldehyde 3-phosphate + dihydroxyacetone phosphate. It functions in the pathway carbohydrate degradation; glycolysis; D-glyceraldehyde 3-phosphate and glycerone phosphate from D-glucose: step 4/4. Plays a key role in glycolysis and gluconeogenesis. The protein is Fructose-bisphosphate aldolase 3, chloroplastic of Arabidopsis thaliana (Mouse-ear cress).